The sequence spans 604 residues: Elongation factor 4 (604 aa).

The tr-type G domain occupies 7 to 189 (SRLRNFCIIA…AVVDRIPPPA (183 aa)). Residues 19–24 (DHGKST) and 136–139 (NKID) each bind GTP.

The protein belongs to the TRAFAC class translation factor GTPase superfamily. Classic translation factor GTPase family. LepA subfamily.

The protein resides in the cell inner membrane. It catalyses the reaction GTP + H2O = GDP + phosphate + H(+). Required for accurate and efficient protein synthesis under certain stress conditions. May act as a fidelity factor of the translation reaction, by catalyzing a one-codon backward translocation of tRNAs on improperly translocated ribosomes. Back-translocation proceeds from a post-translocation (POST) complex to a pre-translocation (PRE) complex, thus giving elongation factor G a second chance to translocate the tRNAs correctly. Binds to ribosomes in a GTP-dependent manner. The chain is Elongation factor 4 from Prochlorococcus marinus (strain MIT 9303).